Reading from the N-terminus, the 226-residue chain is Uridylate kinase (226 aa).

6-10 lines the ATP pocket; it reads KISGK. G43 contributes to the UMP binding site. Residues G44 and R48 each coordinate ATP. Residues D65 and 113-119 contribute to the UMP site; that span reads FQPGQST. 4 residues coordinate ATP: T139, N140, Y145, and D148.

This sequence belongs to the UMP kinase family. In terms of assembly, homohexamer.

The protein resides in the cytoplasm. The enzyme catalyses UMP + ATP = UDP + ADP. The protein operates within pyrimidine metabolism; CTP biosynthesis via de novo pathway; UDP from UMP (UMPK route): step 1/1. Its activity is regulated as follows. Inhibited by UTP. In terms of biological role, catalyzes the reversible phosphorylation of UMP to UDP. This chain is Uridylate kinase, found in Saccharolobus islandicus (strain Y.N.15.51 / Yellowstone #2) (Sulfolobus islandicus).